A 450-amino-acid polypeptide reads, in one-letter code: Phosphoglucosamine mutase (450 aa).

Ser101 functions as the Phosphoserine intermediate in the catalytic mechanism. Residues Ser101, Asp241, Asp243, and Asp245 each coordinate Mg(2+). A Phosphoserine modification is found at Ser101.

Belongs to the phosphohexose mutase family. The cofactor is Mg(2+). In terms of processing, activated by phosphorylation.

The catalysed reaction is alpha-D-glucosamine 1-phosphate = D-glucosamine 6-phosphate. Its function is as follows. Catalyzes the conversion of glucosamine-6-phosphate to glucosamine-1-phosphate. The polypeptide is Phosphoglucosamine mutase (Listeria innocua serovar 6a (strain ATCC BAA-680 / CLIP 11262)).